Here is a 320-residue protein sequence, read N- to C-terminus: Malate dehydrogenase (320 aa).

NAD(+) contacts are provided by residues 10-15 (GAGNIG) and D34. Substrate-binding residues include R83 and R89. NAD(+)-binding positions include N96 and 119–121 (ITN). Substrate contacts are provided by N121 and R152. The active-site Proton acceptor is the H176.

The protein belongs to the LDH/MDH superfamily. MDH type 3 family.

The enzyme catalyses (S)-malate + NAD(+) = oxaloacetate + NADH + H(+). In terms of biological role, catalyzes the reversible oxidation of malate to oxaloacetate. The sequence is that of Malate dehydrogenase from Rhizorhabdus wittichii (strain DSM 6014 / CCUG 31198 / JCM 15750 / NBRC 105917 / EY 4224 / RW1) (Sphingomonas wittichii).